A 334-amino-acid chain; its full sequence is GTP 3',8-cyclase (334 aa).

The 227-residue stretch at arginine 13 to alanine 239 folds into the Radical SAM core domain. A GTP-binding site is contributed by arginine 22. [4Fe-4S] cluster contacts are provided by cysteine 29 and cysteine 33. Tyrosine 35 is a binding site for S-adenosyl-L-methionine. A [4Fe-4S] cluster-binding site is contributed by cysteine 36. Arginine 73 contacts GTP. Position 77 (glycine 77) interacts with S-adenosyl-L-methionine. A GTP-binding site is contributed by threonine 104. Serine 128 contributes to the S-adenosyl-L-methionine binding site. A GTP-binding site is contributed by lysine 165. Residue methionine 199 coordinates S-adenosyl-L-methionine. 2 residues coordinate [4Fe-4S] cluster: cysteine 262 and cysteine 265. Residue arginine 267 to arginine 269 coordinates GTP. Cysteine 279 lines the [4Fe-4S] cluster pocket.

The protein belongs to the radical SAM superfamily. MoaA family. Monomer and homodimer. It depends on [4Fe-4S] cluster as a cofactor.

The catalysed reaction is GTP + AH2 + S-adenosyl-L-methionine = (8S)-3',8-cyclo-7,8-dihydroguanosine 5'-triphosphate + 5'-deoxyadenosine + L-methionine + A + H(+). Its pathway is cofactor biosynthesis; molybdopterin biosynthesis. Functionally, catalyzes the cyclization of GTP to (8S)-3',8-cyclo-7,8-dihydroguanosine 5'-triphosphate. The chain is GTP 3',8-cyclase from Vibrio atlanticus (strain LGP32) (Vibrio splendidus (strain Mel32)).